The sequence spans 358 residues: tRNA N6-adenosine threonylcarbamoyltransferase (358 aa).

Fe cation contacts are provided by His-122 and His-126. Residues 145–149 (LVSGG), Asp-178, Gly-191, and Asn-287 contribute to the substrate site. Residue Asp-315 participates in Fe cation binding.

Belongs to the KAE1 / TsaD family. Fe(2+) is required as a cofactor.

Its subcellular location is the cytoplasm. The enzyme catalyses L-threonylcarbamoyladenylate + adenosine(37) in tRNA = N(6)-L-threonylcarbamoyladenosine(37) in tRNA + AMP + H(+). Functionally, required for the formation of a threonylcarbamoyl group on adenosine at position 37 (t(6)A37) in tRNAs that read codons beginning with adenine. Is involved in the transfer of the threonylcarbamoyl moiety of threonylcarbamoyl-AMP (TC-AMP) to the N6 group of A37, together with TsaE and TsaB. TsaD likely plays a direct catalytic role in this reaction. The protein is tRNA N6-adenosine threonylcarbamoyltransferase of Hydrogenovibrio crunogenus (strain DSM 25203 / XCL-2) (Thiomicrospira crunogena).